The following is a 393-amino-acid chain: Formate-dependent phosphoribosylglycinamide formyltransferase (393 aa).

Residues 17–18 (EL) and E77 contribute to the N(1)-(5-phospho-beta-D-ribosyl)glycinamide site. Residues R109, K150, 155–160 (SSGKGQ), 190–193 (EEFL), and E198 contribute to the ATP site. An ATP-grasp domain is found at 114 to 304 (DLAAGELGLR…EFELHLRAVL (191 aa)). Mg(2+) contacts are provided by E263 and E275. N(1)-(5-phospho-beta-D-ribosyl)glycinamide-binding positions include D282, K354, and 361–362 (RR).

It belongs to the PurK/PurT family. In terms of assembly, homodimer.

The enzyme catalyses N(1)-(5-phospho-beta-D-ribosyl)glycinamide + formate + ATP = N(2)-formyl-N(1)-(5-phospho-beta-D-ribosyl)glycinamide + ADP + phosphate + H(+). Its pathway is purine metabolism; IMP biosynthesis via de novo pathway; N(2)-formyl-N(1)-(5-phospho-D-ribosyl)glycinamide from N(1)-(5-phospho-D-ribosyl)glycinamide (formate route): step 1/1. Involved in the de novo purine biosynthesis. Catalyzes the transfer of formate to 5-phospho-ribosyl-glycinamide (GAR), producing 5-phospho-ribosyl-N-formylglycinamide (FGAR). Formate is provided by PurU via hydrolysis of 10-formyl-tetrahydrofolate. The polypeptide is Formate-dependent phosphoribosylglycinamide formyltransferase (Synechococcus sp. (strain RCC307)).